The sequence spans 208 residues: Intraflagellar transport protein 43 homolog (208 aa).

Methionine 1 is subject to N-acetylmethionine. Residues 18–65 (SRAKMGRRAQQESAQAENHLNGKNSSLTLTGETSSAKLPRCRQGGWAG) are disordered. Polar residues predominate over residues 28-53 (QESAQAENHLNGKNSSLTLTGETSSA). Serine 78 bears the Phosphoserine mark.

This sequence belongs to the IFT43 family. As to quaternary structure, component of the IFT complex A (IFT-A) complex. IFT-A complex is divided into a core subcomplex composed of IFT122:IFT140:WDR19 which is associated with TULP3 and a peripheral subcomplex composed of IFT43:WDR35:TTC21B. Interacts directy with IFT122, WDR35 and TTC21B. Expressed in the retina, predominantly in the photoreceptor outer segment.

Its subcellular location is the cytoplasm. It localises to the cytoskeleton. The protein resides in the cell projection. It is found in the cilium. Functionally, as a component of IFT complex A (IFT-A), a complex required for retrograde ciliary transport and entry into cilia of G protein-coupled receptors (GPCRs), it is involved in ciliogenesis. Involved in retrograde ciliary transport along microtubules from the ciliary tip to the base. This Homo sapiens (Human) protein is Intraflagellar transport protein 43 homolog.